Reading from the N-terminus, the 161-residue chain is Nucleotide-binding protein Sfri_0732 (161 aa).

The protein belongs to the YajQ family.

Functionally, nucleotide-binding protein. The polypeptide is Nucleotide-binding protein Sfri_0732 (Shewanella frigidimarina (strain NCIMB 400)).